Reading from the N-terminus, the 132-residue chain is MTMTDPVADMLTRLRNANSAHHDTVSMPHSKLKVHIAEILTTEGYISGWEVADARVGQTLTLSLKFGPNRERSIAGIKRVSKPGLRVYAKSTELPKVLGGLGVAILSTSSGLLTDRQAEKKGVGGEVLAYVW.

It belongs to the universal ribosomal protein uS8 family. Part of the 30S ribosomal subunit. Contacts proteins S5 and S12.

In terms of biological role, one of the primary rRNA binding proteins, it binds directly to 16S rRNA central domain where it helps coordinate assembly of the platform of the 30S subunit. In Leifsonia xyli subsp. xyli (strain CTCB07), this protein is Small ribosomal subunit protein uS8.